A 610-amino-acid polypeptide reads, in one-letter code: Menin (610 aa).

An interaction with FANCD2 region spans residues 214–390 (GVAERSWLYL…SLLEAGEERP (177 aa)). Disordered stretches follow at residues 385-404 (AGEE…GSAL) and 460-552 (REAE…PVLT). Over residues 393–402 (QTQGTQSQGS) the composition is skewed to low complexity. Residues 484 to 500 (RRESKPEEPPPPKKPAL) are compositionally biased toward basic and acidic residues. Ser-487 bears the Phosphoserine mark. 2 stretches are compositionally biased toward pro residues: residues 512–521 (PGPPRKPPGT) and 537–548 (VPAPAASPPPEG). Ser-543 carries the post-translational modification Phosphoserine. Thr-594 bears the Phosphothreonine mark.

In terms of assembly, component of the MLL-HCF complex, at least composed of KMT2A/MLL1, MEN1, ASH2L, RBBP5, DPY30, WDR5, HCFC1 and HCFC2. Component of the menin-associated histone methyltransferase complex, at least composed of KMT2B/MLL4, MEN1, ASH2L, RBBP5, DPY30 and WDR5. Interacts with POLR2B. Interacts with POLR2A phosphorylated at 'Ser-5', but not with the unphosphorylated, nor 'Ser-2' phosphorylated POLR2A forms. Interacts with FANCD2 and DBF4. Interacts with SMAD3, but not with SMAD2, nor SMAD4. Directly interacts with NFKB1, NFKB2 and RELA. Interacts with JUND (via MBM motif); inhibits the interaction of JUND with MAPK10 and the phosphorylation of JUND by MAP kinases MAPK8 and MAPK10. Interacts with KMT2A (via MBM motif). The KMT2A-MEN1 complex interacts with PSIP1 with a greater affinity as MEN1 enhances interaction of KMT2A with PSIP1.

The protein resides in the nucleus. In terms of biological role, essential component of a MLL/SET1 histone methyltransferase (HMT) complex, a complex that specifically methylates 'Lys-4' of histone H3 (H3K4). Functions as a transcriptional regulator. Binds to the TERT promoter and represses telomerase expression. Plays a role in TGFB1-mediated inhibition of cell-proliferation, possibly regulating SMAD3 transcriptional activity. Represses JUND-mediated transcriptional activation on AP1 sites, as well as that mediated by NFKB subunit RELA. Positively regulates HOXC8 and HOXC6 gene expression. May be involved in normal hematopoiesis through the activation of HOXA9 expression. May be involved in DNA repair. The protein is Menin (MEN1) of Bos taurus (Bovine).